A 210-amino-acid polypeptide reads, in one-letter code: Small ribosomal subunit protein uS7 (210 aa).

Over residues 1 to 22 (MSDEQPAEDETEEAAAESEDTQ) the composition is skewed to acidic residues. A disordered region spans residues 1-23 (MSDEQPAEDETEEAAAESEDTQE).

Belongs to the universal ribosomal protein uS7 family. In terms of assembly, part of the 30S ribosomal subunit. Contacts proteins S9 and S11.

Its function is as follows. One of the primary rRNA binding proteins, it binds directly to 16S rRNA where it nucleates assembly of the head domain of the 30S subunit. Is located at the subunit interface close to the decoding center. The protein is Small ribosomal subunit protein uS7 of Halobacterium salinarum (strain ATCC 29341 / DSM 671 / R1).